An 872-amino-acid chain; its full sequence is Oxidation resistance protein 1 (872 aa).

Residues 1 to 86 form a disordered region; it reads MSVTNLSWLK…QKKTLDKKDG (86 aa). Basic and acidic residues predominate over residues 63–86; that stretch reads RRSELKRFYTIDTGQKKTLDKKDG. S90 bears the Phosphoserine mark. Residues 98 to 141 form the LysM domain; that stretch reads VKYTVESRDSLNSIALKFDTTPNELVQLNKLFSRAVVTGQVLYV. T118 carries the phosphothreonine modification. Over residues 150-168 the composition is skewed to low complexity; the sequence is VESSPSLSPISPLSPTSSE. A disordered region spans residues 150–187; sequence VESSPSLSPISPLSPTSSEAELEKTTTPDVVHPKEPTP. Residues 170–184 are compositionally biased toward basic and acidic residues; sequence ELEKTTTPDVVHPKE. Residues S201, S202, and S204 each carry the phosphoserine modification. The 57-residue stretch at 212 to 268 folds into the GRAM domain; that stretch reads EKFLKINCRYITSSKGTVSGVLLVTPNNIMFDPHKTDPLVQENGCEEYGIMCPMEEV. Phosphoserine occurs at positions 294, 334, and 336. Residues 314-338 form a disordered region; sequence SRIRDAANDSASTAPRSTEESLSED. T341 is subject to Phosphothreonine. Phosphoserine occurs at positions 346 and 496. A mediates oxidative antimutator activity region spans residues 549–576; it reads RRHRLHKFLCLRVRKPMRKTFVSQASAT. One can recognise a TLDc domain in the interval 711 to 872; it reads HLLLPDQIIK…IQDIEIWAFK (162 aa).

The protein belongs to the OXR1 family.

The protein resides in the mitochondrion. Functionally, may be involved in protection from oxidative damage. This chain is Oxidation resistance protein 1 (OXR1), found in Bos taurus (Bovine).